The sequence spans 397 residues: Enoyl-[acyl-carrier-protein] reductase [NADH] (397 aa).

NAD(+) is bound by residues 48 to 53 (GASTGY), 74 to 75 (FE), 111 to 112 (DA), and 139 to 140 (VA). A substrate-binding site is contributed by Tyr225. The active-site Proton donor is the Tyr235. NAD(+)-binding positions include Lys244 and 273–275 (VVT).

The protein belongs to the TER reductase family. As to quaternary structure, monomer.

The enzyme catalyses a 2,3-saturated acyl-[ACP] + NAD(+) = a (2E)-enoyl-[ACP] + NADH + H(+). It participates in lipid metabolism; fatty acid biosynthesis. Involved in the final reduction of the elongation cycle of fatty acid synthesis (FAS II). Catalyzes the reduction of a carbon-carbon double bond in an enoyl moiety that is covalently linked to an acyl carrier protein (ACP). The sequence is that of Enoyl-[acyl-carrier-protein] reductase [NADH] from Burkholderia thailandensis (strain ATCC 700388 / DSM 13276 / CCUG 48851 / CIP 106301 / E264).